The chain runs to 259 residues: Putative zinc metalloprotease Rip2 (259 aa).

The next 2 membrane-spanning stretches (helical) occupy residues 14-34 (PIFL…WIAA) and 39-59 (PLSY…SLCL). Histidine 60 contacts Zn(2+). Glutamate 61 is a catalytic residue. Histidine 64 contributes to the Zn(2+) binding site. 4 helical membrane-spanning segments follow: residues 96 to 116 (LGLP…GAVY), 129 to 149 (IVSL…LGLT), 159 to 179 (VFWS…VLNL), and 203 to 223 (LAPA…TPAL).

It belongs to the peptidase M50B family. It depends on Zn(2+) as a cofactor.

The protein resides in the cell membrane. The protein is Putative zinc metalloprotease Rip2 (rip2) of Mycolicibacterium smegmatis (strain ATCC 700084 / mc(2)155) (Mycobacterium smegmatis).